An 872-amino-acid polypeptide reads, in one-letter code: MKPSEAREHAIRKIKEYLERRHKQQFKALFGCLTINIYLKIFTLISTPDLCNCRLVCRKFQQLCDYNSIYVKKLLLMNAWDVTLSRKLYYESQDGMSQANMSSNTSKGFHLQSSDKKYADSDRPKLSSSSLLSLPDQKIPFPVDYSTVQGKQVVLTVLDCVSQRVEFARLDYIKVWRALAPIYRNLAYASNTIDPIAFSAFRTPEEQSKVLKYLIRFGNSYPYGTYRQAMQNAILDMASLFEQACLDEFELGLHSRNLDLLRKFSHVLHDFSGPNAYVSMYLAKQTDFVRSFFHFDPYSLFISNNLEEIHINWNILESVVNDTIKLLESESKFSEATLPEPELVQVPYAKDILGNSLKDYVISICEHIGEEETELFLVFISGFYGLCKKFFSIPNGPALVDTIFQPQIDIFISQELHYFKTVGWSLVDQWDQKLEEKEDATECFFYKNVSQNTAKNNFLETFKNVMLLPVSLFTIPSENNSASNLAEKAIEQKEEEDPELSKLDAARFVPANIYVSKDRLKHLPTTELAAQAAVLDSKLEGISTMFSLELALKIVHLCKVSLARAKVFMGTSVPQDDDIKGLSKDLFVQLLRELGQGHLKHGFDRAIEHLSSFDPRRDFSSNTVEPVVKFLELINVGDMIQQMMDSFFNEEMSPICVKDDMFDPAIAEKKKFEQLLDERAAFGLHKGINVLIEHADFLLETKTPMNLFSDQTIGSITNTIEPTAAAKNVVQFLGFHMRILVGRADHEILDVFYKEVGMRLFDSLTRYIKSHKFSVDGGLKLLSDCNLYYEFIHSLHQSSLLPYFKTLKEIAHLFIIDGKNAEEIGKLATDTSRFSSAFHTEEVYEILHSRIDWLNIKYEVDKVIHGLACCIM.

Residues 30–75 (FGCLTINIYLKIFTLISTPDLCNCRLVCRKFQQLCDYNSIYVKKLL) form the F-box domain. Positions 101 to 122 (MSSNTSKGFHLQSSDKKYADSD) are disordered. The span at 113-122 (SSDKKYADSD) shows a compositional bias: basic and acidic residues.

Interacts with skp1. Forms a complex with pof6 and skp1.

The protein localises to the cytoplasm. The protein resides in the nucleus. In terms of biological role, together with skp1, essential for septum processing and cell separation. The sequence is that of F-box protein pof6 (pof6) from Schizosaccharomyces pombe (strain 972 / ATCC 24843) (Fission yeast).